The primary structure comprises 224 residues: Cytidylate kinase (224 aa).

An ATP-binding site is contributed by 11–19; the sequence is GPAAAGKST.

The protein belongs to the cytidylate kinase family. Type 1 subfamily.

It localises to the cytoplasm. The enzyme catalyses CMP + ATP = CDP + ADP. The catalysed reaction is dCMP + ATP = dCDP + ADP. This chain is Cytidylate kinase, found in Geobacillus sp. (strain WCH70).